Here is a 740-residue protein sequence, read N- to C-terminus: Melanoma-associated antigen D4 (740 aa).

The span at 1–11 shows a compositional bias: basic and acidic residues; sequence MAEGSYRKESE. 4 disordered regions span residues 1–27, 139–208, 242–298, and 321–377; these read MAEG…EVGE, ATHQ…GPST, PAGV…ALAK, and IPEP…ASQP. Residues 14-27 are compositionally biased toward acidic residues; it reads NVEDMDEGSDEVGE. Composition is skewed to polar residues over residues 141–155 and 162–175; these read HQAS…TSAA and PETS…SRML. Low complexity predominate over residues 185 to 207; sequence APARSPQPQTSSQAQEAAAEGPS. Low complexity predominate over residues 321 to 337; it reads IPEPESAAATSQQSAEP. Over residues 354–363 the composition is skewed to acidic residues; the sequence is DEYESGEEER. The 199-residue stretch at 414-612 folds into the MAGE domain; sequence LQERANKLVK…REWRAHFLEA (199 aa). The segment at 697–722 is disordered; the sequence is WRAGVSSGTNGAASASMLDGPSTSST.

Interacts with TRIM27.

In terms of biological role, may enhance ubiquitin ligase activity of RING-type zinc finger-containing E3 ubiquitin-protein ligases. Proposed to act through recruitment and/or stabilization of the Ubl-conjugating enzyme (E2) at the E3:substrate complex. The protein is Melanoma-associated antigen D4 (MAGED4) of Bos taurus (Bovine).